Here is a 256-residue protein sequence, read N- to C-terminus: Small ribosomal subunit protein bS18m (256 aa).

The interval 19–106 (GQRTAQFSTT…GGQRYGSNSQ (88 aa)) is disordered. The span at 21–30 (RTAQFSTTSP) shows a compositional bias: polar residues. The segment covering 44-66 (NAPRTNTNTSSPSSNNNNNAGSS) has biased composition (low complexity).

Belongs to the bacterial ribosomal protein bS18 family. In terms of assembly, component of the mitochondrial small ribosomal subunit (mt-SSU). Mature N.crassa 74S mitochondrial ribosomes consist of a small (37S) and a large (54S) subunit. The 37S small subunit contains a 16S ribosomal RNA (16S mt-rRNA) and 32 different proteins. The 54S large subunit contains a 23S rRNA (23S mt-rRNA) and 42 different proteins.

The protein resides in the mitochondrion. Its function is as follows. Component of the mitochondrial ribosome (mitoribosome), a dedicated translation machinery responsible for the synthesis of mitochondrial genome-encoded proteins, including at least some of the essential transmembrane subunits of the mitochondrial respiratory chain. The mitoribosomes are attached to the mitochondrial inner membrane and translation products are cotranslationally integrated into the membrane. This Neurospora crassa (strain ATCC 24698 / 74-OR23-1A / CBS 708.71 / DSM 1257 / FGSC 987) protein is Small ribosomal subunit protein bS18m (rsm18).